The primary structure comprises 1047 residues: Helicase-like transcription factor CHR27 (1047 aa).

Positions 1–11 (MDSAIEISSGS) are enriched in low complexity. Disordered stretches follow at residues 1 to 89 (MDSA…SGSG), 103 to 130 (RTLP…SGSR), and 145 to 174 (KRTL…GSRF). Polar residues-rich tracts occupy residues 52–88 (TNQA…SSGS) and 118–128 (SGTNNISNASG). Residues 296–597 (ETSSFNCPGG…YSYFRFLRYD (302 aa)) enclose the Helicase ATP-binding domain. 309–316 (DDQGLGKT) is a binding site for ATP. Disordered regions lie at residues 349-407 (ADDE…TRAF) and 511-533 (VGAS…SEPD). The span at 354–368 (DNAKHESGSHVKPEL) shows a compositional bias: basic and acidic residues. Positions 370 to 379 (VSSNSETSVL) are enriched in polar residues. Positions 385–400 (DENDSSDMEKAEDEEA) are enriched in acidic residues. Residues 511–523 (VGASKKSKRRGRK) are compositionally biased toward basic residues. Residues 751 to 790 (CYECNEPPEKPVVTLCGHIFCYECVLEYITGDENTCPVPR) form an RING-type; degenerate zinc finger. The segment covering 851–868 (QPDSPNSAQHGQMPSSSR) has biased composition (polar residues). The interval 851-873 (QPDSPNSAQHGQMPSSSRPYDDD) is disordered. One can recognise a Helicase C-terminal domain in the interval 887 to 1042 (SPSQGAVKTI…ATRLTVDDLK (156 aa)).

It belongs to the SNF2/RAD54 helicase family. RAD16 subfamily. In terms of assembly, interacts with SUVR2. Interacts with itself.

It localises to the nucleus. Its function is as follows. Probable helicase-like transcription factor involved in transcriptional gene silencing. Associates with SUVR2 and contributes to transcriptional gene silencing at RNA-directed DNA methylation (RdDM) target loci but also at RdDM-independent target loci. May be involved in nucleosome positioning to form ordered nucleosome arrays on chromatin. Associates with SUVR2 and functions redundantly with FRG2. Required for the efficient methylation of a broad range of RdDM target loci. The protein is Helicase-like transcription factor CHR27 of Arabidopsis thaliana (Mouse-ear cress).